The chain runs to 233 residues: Large ribosomal subunit protein uL1 (233 aa).

This sequence belongs to the universal ribosomal protein uL1 family. Part of the 50S ribosomal subunit.

Functionally, binds directly to 23S rRNA. The L1 stalk is quite mobile in the ribosome, and is involved in E site tRNA release. In terms of biological role, protein L1 is also a translational repressor protein, it controls the translation of the L11 operon by binding to its mRNA. This is Large ribosomal subunit protein uL1 from Geotalea uraniireducens (strain Rf4) (Geobacter uraniireducens).